Reading from the N-terminus, the 929-residue chain is MGNSSGWRGPAGQRRMLFLFLLSLLDQALSEPIRYAIPEELDRGSLVGNLAKDLGFGVGDLPTRNLRVIAEKKFFTVSPENGNLLVSDRIDREEICGKKSTCVLEFEMVAEKPLNFFHVTVLIQDINDNPPTFSQNITELEISELALTGATFALESAQDPDVGVNSLQQYYLSPDPHFSLIQKENLDGSRYPELVLKAPLDREEQPHHHLVLTAVDGGEPSRSCTTQIRVIVADANDNPPVFTQDMYRVNVAENLPAGSSVLKVMAIDMDEGINAEIIYAFINIGKEVRQLFKLDSKTGELTTIGELDFEERDSYTIGVEAKDGGHHTAYCKVQIDISDENDNAPEITLASESQHIQEDAELGTAVALIKTHDLDSGFNGEILCQLKGNFPFKIVQDTKNTYRLVTDGALDREQIPEYNVTITATDKGNPPLSSSKTITLHILDVNDNVPVFHQASYTVHVAENNPPGASIAHVRASDPDLGPNGLVSYYIVASDLEPRELSSYVSVSARSGVVFAQRAFDHEQLRAFELTLQARDQGSPTLSANVSLRVLVDDRNDNAPLVLYPALGPEGSALFDMVPRSAEPGYLVTKVVAVDADSGYNAWLSYHIVQASEPGLFSLGLRTGEVRTARTLGDREAARQRLLVTVRDGGQQPLSATVMLHLIFADSLQEIQPDLSDRPTPSDPQAELQFHLVVALALISVLFLLAVILAISLRLRCSSRPATEGYFQPGVCFKTVPGVLPTYSERTLPYSYNPCAASHSSNTEFKFLNIKAENAAPQDLLCDEASWFESNDNPEMPSNSGNLQKQAPPNTDWRFSQAQRPGTSGSQNGDDTGTWPNNQFDTEMLQAMILASASEAADGSSTLGGGAGTMGLSARYGPQFTLQHVPDYRQNVYIPGSNATLTNAAGKRDGKAPAGGNGNKKKSGKKEKK.

A signal peptide spans 1–30 (MGNSSGWRGPAGQRRMLFLFLLSLLDQALS). 6 consecutive Cadherin domains span residues 31 to 133 (EPIR…PPTF), 134 to 242 (SQNI…PPVF), 243 to 347 (TQDM…APEI), 348 to 452 (TLAS…VPVF), 453 to 562 (HQAS…APLV), and 570 to 675 (EGSA…QPDL). Residues 31 to 691 (EPIRYAIPEE…SDPQAELQFH (661 aa)) lie on the Extracellular side of the membrane. Asn136 is a glycosylation site (N-linked (GlcNAc...) asparagine). Residues Asn419 and Asn545 are each glycosylated (N-linked (GlcNAc...) asparagine). The helical transmembrane segment at 692–712 (LVVALALISVLFLLAVILAIS) threads the bilayer. The Cytoplasmic portion of the chain corresponds to 713–929 (LRLRCSSRPA…KKKSGKKEKK (217 aa)). Disordered regions lie at residues 791 to 838 (NDNP…WPNN) and 899 to 929 (ATLT…KEKK). Positions 919 to 929 (NKKKSGKKEKK) are enriched in basic residues.

The protein resides in the cell membrane. In terms of biological role, potential calcium-dependent cell-adhesion protein. May be involved in the establishment and maintenance of specific neuronal connections in the brain. The polypeptide is Protocadherin gamma-B3 (PCDHGB3) (Homo sapiens (Human)).